Consider the following 252-residue polypeptide: DNA-directed RNA polymerase III subunit rpc8 (252 aa).

Residues 214–252 (WTNQSAGDDDENEEDGGENQDDEVAEDDGGEEPTIEEDE) form a disordered region. The segment covering 220–252 (GDDDENEEDGGENQDDEVAEDDGGEEPTIEEDE) has biased composition (acidic residues).

Belongs to the eukaryotic RPB7/RPC8 RNA polymerase subunit family. In terms of assembly, component of the RNA polymerase III (Pol III) complex consisting of several subunits.

It localises to the nucleus. Its function is as follows. DNA-dependent RNA polymerase catalyzes the transcription of DNA into RNA using the four ribonucleoside triphosphates as substrates. The chain is DNA-directed RNA polymerase III subunit rpc8 (polr3h-1) from Dictyostelium discoideum (Social amoeba).